Reading from the N-terminus, the 508-residue chain is Aldehyde dehydrogenase family 7 member A1 (508 aa).

An NAD(+)-binding site is contributed by 244 to 249; the sequence is GSSKVG. The active-site Proton acceptor is Glu266. Cys300 acts as the Nucleophile in catalysis.

Belongs to the aldehyde dehydrogenase family. Homotetramer.

The enzyme catalyses an aldehyde + NAD(+) + H2O = a carboxylate + NADH + 2 H(+). In Pisum sativum (Garden pea), this protein is Aldehyde dehydrogenase family 7 member A1.